We begin with the raw amino-acid sequence, 150 residues long: Avidin-related protein 4/5 (150 aa).

Positions 1–24 (MVHTTSPLLLLLLLSLALVAPSLS) are cleaved as a signal peptide. An Avidin-like domain is found at 26–147 (RKCSLTGKWT…GYNNFTRLCT (122 aa)). Cys28 and Cys105 are joined by a disulfide. Positions 36, 40, 57, 59, and 63 each coordinate biotin. N-linked (GlcNAc...) asparagine glycans are attached at residues Asn67 and Asn93. Biotin contacts are provided by Ser95 and Asn140. A glycan (N-linked (GlcNAc...) asparagine) is linked at Asn141.

This sequence belongs to the avidin/streptavidin family. In terms of assembly, homotetramer.

The protein resides in the secreted. Its function is as follows. Forms a strong non-covalent specific complex with biotin. This chain is Avidin-related protein 4/5 (AVR4), found in Gallus gallus (Chicken).